The sequence spans 461 residues: ATP synthase subunit beta 2 (461 aa).

151–158 (GGAGVGKT) contributes to the ATP binding site.

Belongs to the ATPase alpha/beta chains family. F-type ATPases have 2 components, CF(1) - the catalytic core - and CF(0) - the membrane proton channel. CF(1) has five subunits: alpha(3), beta(3), gamma(1), delta(1), epsilon(1). CF(0) has three main subunits: a(1), b(2) and c(9-12). The alpha and beta chains form an alternating ring which encloses part of the gamma chain. CF(1) is attached to CF(0) by a central stalk formed by the gamma and epsilon chains, while a peripheral stalk is formed by the delta and b chains.

The protein resides in the cell inner membrane. The enzyme catalyses ATP + H2O + 4 H(+)(in) = ADP + phosphate + 5 H(+)(out). In terms of biological role, produces ATP from ADP in the presence of a proton gradient across the membrane. The catalytic sites are hosted primarily by the beta subunits. The polypeptide is ATP synthase subunit beta 2 (Pseudoalteromonas atlantica (strain T6c / ATCC BAA-1087)).